The following is a 139-amino-acid chain: uncharacterized protein (139 aa).

The protein to E.coli YecT.

This is an uncharacterized protein from Rhizobium meliloti (strain 1021) (Ensifer meliloti).